Consider the following 279-residue polypeptide: CDP-paratose synthase (279 aa).

Catalysis depends on Tyr115, which acts as the Proton acceptor.

It belongs to the NAD(P)-dependent epimerase/dehydratase family.

It carries out the reaction CDP-alpha-D-paratose + NADP(+) = CDP-4-dehydro-3,6-dideoxy-alpha-D-glucose + NADPH + H(+). It functions in the pathway nucleotide-sugar biosynthesis; CDP-3,6-dideoxy-D-mannose biosynthesis; CDP-3,6-dideoxy-D-mannose from CTP and alpha-D-glucose 1-phosphate: step 4/5. Its function is as follows. Catalyzes synthesis of paratose and tyvelose, unusual 3,6-dideoxyhexose sugars that form part of the O-antigen in the lipopolysaccharides of several enteric bacteria. This Salmonella typhi protein is CDP-paratose synthase (rfbS).